We begin with the raw amino-acid sequence, 223 residues long: Transcription factor bHLH75 (223 aa).

Positions 58–100 are disordered; the sequence is FPNLLHGNTRRKGNKEESGSKRRRKRSEEEEAMNGDETQKPKD. The bHLH domain occupies 110-160; sequence QATDSHSLAERVRREKINERLKCLQDLVPGCYKAMGMAVMLDVIIDYVRSL.

As to quaternary structure, homodimer. In terms of tissue distribution, expressed in leaves, stems, and flowers.

The protein localises to the nucleus. The polypeptide is Transcription factor bHLH75 (BHLH75) (Arabidopsis thaliana (Mouse-ear cress)).